The primary structure comprises 589 residues: Sentrin-specific protease 2 (589 aa).

Residues 28–31 carry the Nuclear localization signal motif; sequence KRRR. Serine 32 carries the phosphoserine modification. The Nuclear localization signal motif lies at 46–51; that stretch reads PAKRPR. Residues 71–382 form an axin-binding region; sequence GFPFQLTTKP…EKEISNALGH (312 aa). Disordered regions lie at residues 148 to 179 and 191 to 210; these read SFGFTLNSEGYNRRPGGRRHSKGNPESSLMWK and EESGKGLRRPHRTVEEGVQK. A Nuclear export signal motif is present at residues 317 to 332; sequence LEPDLSEEVSARLRLG. A phosphoserine mark is found at serine 333 and serine 344. Positions 395-559 are protease; the sequence is LRITRGDIQT…MFTCKYADYI (165 aa). Active-site residues include histidine 478 and aspartate 495. The active-site Nucleophile is the cysteine 548.

This sequence belongs to the peptidase C48 family. As to quaternary structure, binds to SUMO2 and SUMO3. Interacts with the C-terminal domain of NUP153 via its N-terminus. Interacts with MTA1. Post-translationally, polyubiquitinated; which leads to proteasomal degradation.

The protein resides in the nucleus. Its subcellular location is the nuclear pore complex. It is found in the nucleus membrane. The protein localises to the cytoplasm. In terms of biological role, protease that catalyzes two essential functions in the SUMO pathway. The first is the hydrolysis of an alpha-linked peptide bond at the C-terminal end of the small ubiquitin-like modifier (SUMO) propeptides, SUMO1, SUMO2 and SUMO3 leading to the mature form of the proteins. The second is the deconjugation of SUMO1, SUMO2 and SUMO3 from targeted proteins, by cleaving an epsilon-linked peptide bond between the C-terminal glycine of the mature SUMO and the lysine epsilon-amino group of the target protein. May down-regulate CTNNB1 levels and thereby modulate the Wnt pathway. Deconjugates SUMO2 from MTA1. Plays a dynamic role in adipogenesis by desumoylating and promoting the stabilization of CEBPB. Acts as a regulator of the cGAS-STING pathway by catalyzing desumoylation of CGAS and STING1 during the late phase of viral infection. This Pongo abelii (Sumatran orangutan) protein is Sentrin-specific protease 2 (SENP2).